The following is an 81-amino-acid chain: Putative membrane protein insertion efficiency factor (81 aa).

This sequence belongs to the UPF0161 family.

It is found in the cell inner membrane. Functionally, could be involved in insertion of integral membrane proteins into the membrane. This Pseudomonas syringae pv. tomato (strain ATCC BAA-871 / DC3000) protein is Putative membrane protein insertion efficiency factor.